We begin with the raw amino-acid sequence, 779 residues long: Protein zer-1 homolog (779 aa).

An N-acetylalanine modification is found at Ala2. LRR repeat units lie at residues Ser226 to Leu245, His246 to Arg281, and Leu291 to Glu315. ARM repeat units follow at residues Arg440 to Ile480, Asp524 to Asp569, Thr571 to Glu613, Lys615 to Phe656, and Pro727 to Asn769.

Belongs to the zyg-11 family. Interacts with the ELOC-ELOB/Elongin BC complex. Part of an E3 ubiquitin ligase complex including ZER1, CUL2 and Elongin BC.

Serves as substrate adapter subunit in the E3 ubiquitin ligase complex ZYG11B-CUL2-Elongin BC. Acts redudantly with ZYG11B to target substrates bearing N-terminal glycine degrons for proteasomal degradation. Involved in the clearance of proteolytic fragments generated by caspase cleavage during apoptosis since N-terminal glycine degrons are strongly enriched at caspase cleavage sites. Also important in the quality control of protein N-myristoylation in which N-terminal glycine degrons are conditionally exposed after a failure of N-myristoylation. The sequence is that of Protein zer-1 homolog from Mus musculus (Mouse).